Reading from the N-terminus, the 20-residue chain is Dihydroorotase-like protein (20 aa).

This sequence belongs to the metallo-dependent hydrolases superfamily. DHOase family. PyrC' subfamily. In terms of assembly, heterododecamer of 6 active PyrB subunits and 6 non-catalytic PyrC' subunits.

In terms of biological role, non-functional DHOase. The polypeptide is Dihydroorotase-like protein (pyrC') (Pseudomonas fluorescens biotype A).